Here is a 126-residue protein sequence, read N- to C-terminus: Large ribosomal subunit protein bL17 (126 aa).

Belongs to the bacterial ribosomal protein bL17 family. Part of the 50S ribosomal subunit. Contacts protein L32.

This is Large ribosomal subunit protein bL17 from Lawsonia intracellularis (strain PHE/MN1-00).